The primary structure comprises 412 residues: Exodeoxyribonuclease 7 large subunit (412 aa).

It belongs to the XseA family. As to quaternary structure, heterooligomer composed of large and small subunits.

It localises to the cytoplasm. It carries out the reaction Exonucleolytic cleavage in either 5'- to 3'- or 3'- to 5'-direction to yield nucleoside 5'-phosphates.. In terms of biological role, bidirectionally degrades single-stranded DNA into large acid-insoluble oligonucleotides, which are then degraded further into small acid-soluble oligonucleotides. The protein is Exodeoxyribonuclease 7 large subunit of Nostoc sp. (strain PCC 7120 / SAG 25.82 / UTEX 2576).